Consider the following 576-residue polypeptide: Putative SPbeta prophage-derived single-strand DNA-specific exonuclease YorK (576 aa).

A Phosphotyrosine modification is found at Tyr-473.

This sequence belongs to the RecJ family.

Functionally, putative single-stranded-DNA-specific exonuclease. The polypeptide is Putative SPbeta prophage-derived single-strand DNA-specific exonuclease YorK (yorK) (Bacillus subtilis (strain 168)).